Here is a 56-residue protein sequence, read N- to C-terminus: MTEEVCLMNFKDNEHSVTLNDLKKVKEEAIKIGIICVIITWAIFSINHHHTISAKD.

A helical transmembrane segment spans residues 30-52; the sequence is IKIGIICVIITWAIFSINHHHTI.

The protein localises to the membrane. This is an uncharacterized protein from Dictyostelium discoideum (Social amoeba).